Reading from the N-terminus, the 769-residue chain is Signal transducer and activator of transcription 3.1 (769 aa).

Positions 150 to 162 match the Essential for nuclear import motif; it reads DVRKKVQDLEQKM. Residues 580–670 form the SH2 domain; sequence WNEGYIMGFI…DATNILVSPL (91 aa). Phosphoserine; by NLK is present on serine 728.

Belongs to the transcription factor STAT family. As to quaternary structure, forms a homodimer or a heterodimer with a related family member, such as stat1. Interacts with nlk.2. Post-translationally, phosphorylation of both tyrosine and serine residues, together with dimerization, is required for mesoderm induction.

It localises to the cytoplasm. It is found in the nucleus. Its function is as follows. Transcription factor that binds to target promoter sequences and activates transcription upon il6st/gp130 stimulation. Mediates ventralization of embryos, at least in part via inhibition of smad2 signaling. Required for hairy2 to induce dll1/delta1 and promote neural crest cell proliferation and differentiation. Involved in TGFbeta-mediated mesoderm induction in early embryos, acting downstream of map3k7/tak1 and nlk.2. This chain is Signal transducer and activator of transcription 3.1 (stat3.1), found in Xenopus laevis (African clawed frog).